Reading from the N-terminus, the 455-residue chain is Bifunctional protein GlmU (455 aa).

A pyrophosphorylase region spans residues 1–225; that stretch reads MNIVILAAGL…EWETLGVNSK (225 aa). UDP-N-acetyl-alpha-D-glucosamine is bound by residues 6–9, Lys20, Gln71, 76–77, 98–100, Gly135, Glu150, Asn165, and Asn223; these read LAAG, GT, and YGD. Asp100 contacts Mg(2+). A Mg(2+)-binding site is contributed by Asn223. Residues 226–246 are linker; the sequence is VQLAELERIHQRNLAQQLLED. The N-acetyltransferase stretch occupies residues 247–455; it reads GVTLIDPARI…QRPVKQKKDA (209 aa). 2 residues coordinate UDP-N-acetyl-alpha-D-glucosamine: Arg329 and Lys347. Residue His359 is the Proton acceptor of the active site. Residues Tyr362 and Asn373 each contribute to the UDP-N-acetyl-alpha-D-glucosamine site. Residues Ala376, 382 to 383, Ser401, Ala419, and Arg436 contribute to the acetyl-CoA site; that span reads NY.

It in the N-terminal section; belongs to the N-acetylglucosamine-1-phosphate uridyltransferase family. The protein in the C-terminal section; belongs to the transferase hexapeptide repeat family. As to quaternary structure, homotrimer. Requires Mg(2+) as cofactor.

It is found in the cytoplasm. The catalysed reaction is alpha-D-glucosamine 1-phosphate + acetyl-CoA = N-acetyl-alpha-D-glucosamine 1-phosphate + CoA + H(+). The enzyme catalyses N-acetyl-alpha-D-glucosamine 1-phosphate + UTP + H(+) = UDP-N-acetyl-alpha-D-glucosamine + diphosphate. Its pathway is nucleotide-sugar biosynthesis; UDP-N-acetyl-alpha-D-glucosamine biosynthesis; N-acetyl-alpha-D-glucosamine 1-phosphate from alpha-D-glucosamine 6-phosphate (route II): step 2/2. It participates in nucleotide-sugar biosynthesis; UDP-N-acetyl-alpha-D-glucosamine biosynthesis; UDP-N-acetyl-alpha-D-glucosamine from N-acetyl-alpha-D-glucosamine 1-phosphate: step 1/1. The protein operates within bacterial outer membrane biogenesis; LPS lipid A biosynthesis. In terms of biological role, catalyzes the last two sequential reactions in the de novo biosynthetic pathway for UDP-N-acetylglucosamine (UDP-GlcNAc). The C-terminal domain catalyzes the transfer of acetyl group from acetyl coenzyme A to glucosamine-1-phosphate (GlcN-1-P) to produce N-acetylglucosamine-1-phosphate (GlcNAc-1-P), which is converted into UDP-GlcNAc by the transfer of uridine 5-monophosphate (from uridine 5-triphosphate), a reaction catalyzed by the N-terminal domain. The chain is Bifunctional protein GlmU from Ralstonia nicotianae (strain ATCC BAA-1114 / GMI1000) (Ralstonia solanacearum).